The following is a 342-amino-acid chain: MNHSLKPWNTFGIDHNAQHIVCAEDEQQLLNAWQHATAEGQPVLILGEGSNVLFLEDYRGTVIINRIKGIEIHDEPDAWYLHVGAGENWHRLVKYTLQEGMPGLENLALIPGCVGSSPIQNIGAYGVELQRVCAYVDCVELATGKQVRLTAKECRFGYRDSIFKHEYQDRFAIVAVGLRLPKEWQPVLTYGDLTRLDPTTVTPQQVFNAVCHMRTTKLPDPKVNGNAGSFFKNPVVSAETAKALLAQFPTAPNYPQAGGSVKLAAGWLIDQCQLKGMQMGGAAVHRQQALVLINEDNAKSEDVVQLAHHVRQKVGEKFNVWLEPEVRFIGASGEVSAVETIS.

The FAD-binding PCMH-type domain occupies 13–183 (IDHNAQHIVC…VAVGLRLPKE (171 aa)). The active site involves Arg-159. Ser-229 functions as the Proton donor in the catalytic mechanism. Residue Glu-325 is part of the active site.

This sequence belongs to the MurB family. The cofactor is FAD.

The protein localises to the cytoplasm. It catalyses the reaction UDP-N-acetyl-alpha-D-muramate + NADP(+) = UDP-N-acetyl-3-O-(1-carboxyvinyl)-alpha-D-glucosamine + NADPH + H(+). It participates in cell wall biogenesis; peptidoglycan biosynthesis. In terms of biological role, cell wall formation. This is UDP-N-acetylenolpyruvoylglucosamine reductase from Shigella sonnei (strain Ss046).